The sequence spans 432 residues: Putative D-alanyl-D-alanine carboxypeptidase (432 aa).

A helical; Signal-anchor transmembrane segment spans residues 7–25 (ATVLLTFSLSAFAVEYPVL).

This sequence belongs to the peptidase S12 family. YfeW subfamily.

It is found in the cell inner membrane. It carries out the reaction Preferential cleavage: (Ac)2-L-Lys-D-Ala-|-D-Ala. Also transpeptidation of peptidyl-alanyl moieties that are N-acyl substituents of D-alanine.. In Salmonella gallinarum (strain 287/91 / NCTC 13346), this protein is Putative D-alanyl-D-alanine carboxypeptidase.